Consider the following 438-residue polypeptide: UDP-N-acetylmuramoylalanine--D-glutamate ligase (438 aa).

Residue 112–118 participates in ATP binding; that stretch reads GSNGKST.

Belongs to the MurCDEF family.

The protein localises to the cytoplasm. It catalyses the reaction UDP-N-acetyl-alpha-D-muramoyl-L-alanine + D-glutamate + ATP = UDP-N-acetyl-alpha-D-muramoyl-L-alanyl-D-glutamate + ADP + phosphate + H(+). It functions in the pathway cell wall biogenesis; peptidoglycan biosynthesis. Cell wall formation. Catalyzes the addition of glutamate to the nucleotide precursor UDP-N-acetylmuramoyl-L-alanine (UMA). The chain is UDP-N-acetylmuramoylalanine--D-glutamate ligase from Salmonella paratyphi A (strain ATCC 9150 / SARB42).